The sequence spans 65 residues: U11-theraphotoxin-Cg1b (65 aa).

The first 21 residues, 1–21, serve as a signal peptide directing secretion; the sequence is MKTTILVVILGLTLLFALSAA. A propeptide spanning residues 22–29 is cleaved from the precursor; sequence TELKDEER. 3 disulfide bridges follow: C31/C45, C38/C50, and C44/C57.

It belongs to the neurotoxin 10 (Hwtx-1) family. 32 (Jztx-16) subfamily. In terms of tissue distribution, expressed by the venom gland.

The protein resides in the secreted. Its function is as follows. Probable ion channel inhibitor. This Chilobrachys guangxiensis (Chinese earth tiger tarantula) protein is U11-theraphotoxin-Cg1b.